Reading from the N-terminus, the 179-residue chain is Cytochrome b6-f complex iron-sulfur subunit 1 (179 aa).

Residues 21-43 (LLTFGTVTGVALGALYPVVNYFI) traverse the membrane as a helical segment. The Rieske domain maps to 61 to 162 (GNDVSVSKFL…AKTENDKIVL (102 aa)). Positions 108, 110, 126, and 129 each coordinate [2Fe-2S] cluster. A disulfide bridge links cysteine 113 with cysteine 128.

The protein belongs to the Rieske iron-sulfur protein family. In terms of assembly, the 4 large subunits of the cytochrome b6-f complex are cytochrome b6, subunit IV (17 kDa polypeptide, PetD), cytochrome f and the Rieske protein, while the 4 small subunits are PetG, PetL, PetM and PetN. The complex functions as a dimer. [2Fe-2S] cluster serves as cofactor.

Its subcellular location is the cellular thylakoid membrane. The enzyme catalyses 2 oxidized [plastocyanin] + a plastoquinol + 2 H(+)(in) = 2 reduced [plastocyanin] + a plastoquinone + 4 H(+)(out). Functionally, component of the cytochrome b6-f complex, which mediates electron transfer between photosystem II (PSII) and photosystem I (PSI), cyclic electron flow around PSI, and state transitions. This is Cytochrome b6-f complex iron-sulfur subunit 1 from Trichormus variabilis (strain ATCC 29413 / PCC 7937) (Anabaena variabilis).